A 272-amino-acid chain; its full sequence is CDAN1-interacting nuclease 1 (272 aa).

The protein resides in the nucleus. It is found in the cytoplasm. Functionally, may play a role in erythroid cell differentiation. This is CDAN1-interacting nuclease 1 (CDIN1) from Gallus gallus (Chicken).